A 230-amino-acid chain; its full sequence is uncharacterized protein (230 aa).

This is an uncharacterized protein from Sinorhizobium fredii (strain NBRC 101917 / NGR234).